The chain runs to 423 residues: Probable efflux pump mfs2 (423 aa).

Transmembrane regions (helical) follow at residues Thr21–Val41, Ser49–His69, Leu79–Val99, Leu111–Val131, Trp138–His158, Ala220–Leu240, Tyr256–Tyr278, Ile295–Ala315, His319–Phe339, Ala360–Leu380, and Leu392–Trp411.

The protein belongs to the major facilitator superfamily.

It is found in the membrane. Probable efflux pump; part of the gene cluster 27 that mediates the biosynthesis of asparasone A, a sclerotium-specific anthraquinone pigment important for sclerotial survival. This chain is Probable efflux pump mfs2, found in Aspergillus flavus (strain ATCC 200026 / FGSC A1120 / IAM 13836 / NRRL 3357 / JCM 12722 / SRRC 167).